We begin with the raw amino-acid sequence, 471 residues long: Ribulose bisphosphate carboxylase large chain (471 aa).

Residues Asn-115 and Thr-165 each contribute to the substrate site. The active-site Proton acceptor is the Lys-167. Residue Lys-169 participates in substrate binding. 3 residues coordinate Mg(2+): Lys-193, Asp-195, and Glu-196. The residue at position 193 (Lys-193) is an N6-carboxylysine. His-286 functions as the Proton acceptor in the catalytic mechanism. 3 residues coordinate substrate: Arg-287, His-319, and Ser-371.

This sequence belongs to the RuBisCO large chain family. Type I subfamily. Heterohexadecamer of 8 large chains and 8 small chains. It depends on Mg(2+) as a cofactor.

It carries out the reaction 2 (2R)-3-phosphoglycerate + 2 H(+) = D-ribulose 1,5-bisphosphate + CO2 + H2O. The enzyme catalyses D-ribulose 1,5-bisphosphate + O2 = 2-phosphoglycolate + (2R)-3-phosphoglycerate + 2 H(+). Functionally, ruBisCO catalyzes two reactions: the carboxylation of D-ribulose 1,5-bisphosphate, the primary event in carbon dioxide fixation, as well as the oxidative fragmentation of the pentose substrate. Both reactions occur simultaneously and in competition at the same active site. This is Ribulose bisphosphate carboxylase large chain from Alvinoconcha hessleri symbiotic bacterium.